The chain runs to 42 residues: Photosystem I reaction center subunit IX (42 aa).

The chain crosses the membrane as a helical span at residues 7–27; the sequence is YLSTAPVLATLWFGFLAGLLI.

This sequence belongs to the PsaJ family.

The protein resides in the plastid. The protein localises to the chloroplast thylakoid membrane. In terms of biological role, may help in the organization of the PsaE and PsaF subunits. The chain is Photosystem I reaction center subunit IX from Anthoceros angustus (Hornwort).